Consider the following 426-residue polypeptide: MVRDIEDEIRDEKNPRPLDEDDIALLKTYGLGPYSAPIKKVEKEIKDLAKKINDLCGIKESDTGLAPPSQWDLVSDKQMMQEEQPLQVARCTKIISPNTEDAKYVINVKQIAKFVVGLGDKVSPTDIEEGMRVGVDRNKYQIQIPLPPKIDPSVTMMTVEEKPDVTYNDVGGCKEQIEKMREVVELPMLHPEKFVKLGIDPPKGVLCYGPPGTGKTLLARAVANRTDACFIRVIGSELVQKYVGEGARMVRELFQMARSKKACIVFFDEVDAIGGARFDDGVGGDNEVQRTMLEIVNQLDGFDARGNIKVLMATNRPDTLDPALLRPGRLDRKVEFGLPDLESRTQIFKIHTRTMNCERDIRFELLARLCPNSTGADIRSVCTEAGMYAIRARRKTVTEKDFLDAVNKVIKGYQKFSATPKYMVYN.

Residue 209-216 (GPPGTGKT) participates in ATP binding. Residues K400 and K415 each participate in a glycyl lysine isopeptide (Lys-Gly) (interchain with G-Cter in ubiquitin) cross-link.

The protein belongs to the AAA ATPase family. In terms of assembly, component of the 19S regulatory particle (RP/PA700) base subcomplex of the 26S proteasome. The 26S proteasome is composed of a core protease (CP), known as the 20S proteasome, capped at one or both ends by the 19S regulatory particle (RP/PA700). The RP/PA700 complex is composed of at least 17 different subunits in two subcomplexes, the base and the lid, which form the portions proximal and distal to the 20S proteolytic core, respectively.

The protein resides in the cytoplasm. It is found in the nucleus. Functionally, the 26S proteasome is involved in the ATP-dependent degradation of ubiquitinated proteins. The regulatory (or ATPase) complex confers ATP dependency and substrate specificity to the 26S complex. This Arabidopsis thaliana (Mouse-ear cress) protein is 26S proteasome regulatory subunit 7 homolog A (RPT1A).